A 258-amino-acid chain; its full sequence is Ubiquinone/menaquinone biosynthesis C-methyltransferase UbiE (258 aa).

The interval 1–21 (MSESRTSADGGMETSYGFREV) is disordered. Residues Thr81, Asp102, and 130-131 (NA) each bind S-adenosyl-L-methionine.

This sequence belongs to the class I-like SAM-binding methyltransferase superfamily. MenG/UbiE family.

The enzyme catalyses a 2-demethylmenaquinol + S-adenosyl-L-methionine = a menaquinol + S-adenosyl-L-homocysteine + H(+). It catalyses the reaction a 2-methoxy-6-(all-trans-polyprenyl)benzene-1,4-diol + S-adenosyl-L-methionine = a 5-methoxy-2-methyl-3-(all-trans-polyprenyl)benzene-1,4-diol + S-adenosyl-L-homocysteine + H(+). Its pathway is quinol/quinone metabolism; menaquinone biosynthesis; menaquinol from 1,4-dihydroxy-2-naphthoate: step 2/2. It participates in cofactor biosynthesis; ubiquinone biosynthesis. Methyltransferase required for the conversion of demethylmenaquinol (DMKH2) to menaquinol (MKH2) and the conversion of 2-polyprenyl-6-methoxy-1,4-benzoquinol (DDMQH2) to 2-polyprenyl-3-methyl-6-methoxy-1,4-benzoquinol (DMQH2). The protein is Ubiquinone/menaquinone biosynthesis C-methyltransferase UbiE of Rhizobium johnstonii (strain DSM 114642 / LMG 32736 / 3841) (Rhizobium leguminosarum bv. viciae).